The sequence spans 357 residues: Dynein axonemal assembly factor 10 (357 aa).

WD repeat units lie at residues 80-127 (EFTN…IPIW), 132-170 (AHQGSISAIDAYADNLVVCGGKDGTIKVYDTRIKPNSAN), 184-223 (EQTNKSNCWSICTNDNNIIAGFENGDLNIYNLKTNSIQST), and 277-321 (EPNQ…IDKV).

As to quaternary structure, interacts with PIH1D1; the interaction associates DNAAF10 with the R2TP complex. Interacts with several dynein axonemal assembly factors.

The protein localises to the dynein axonemal particle. Functionally, key assembly factor specifically required for the stability of axonemal dynein heavy chains in cytoplasm. This is Dynein axonemal assembly factor 10 (dnaaf10) from Dictyostelium discoideum (Social amoeba).